Here is a 347-residue protein sequence, read N- to C-terminus: N6-Methyl-AMP deaminase-L (347 aa).

The Zn(2+) site is built by H19 and H21. N(6)-methyl-AMP is bound by residues H21, N23, H69, 101–104, D142, and G175; that span reads STPR. H202 contributes to the Zn(2+) binding site. N(6)-methyl-AMP-binding residues include E205, D283, and D284. E205 functions as the Proton donor in the catalytic mechanism. Position 283 (D283) interacts with Zn(2+).

Belongs to the metallo-dependent hydrolases superfamily. Adenosine and AMP deaminases family. In terms of assembly, monomer. Requires Zn(2+) as cofactor.

It catalyses the reaction N(6)-methyl-AMP + H2O + H(+) = IMP + methylamine. Its function is as follows. Catalyzes the hydrolysis of the free cytosolic methylated adenosine nucleotide N(6)-methyl-AMP (N6-mAMP) to produce inositol monophosphate (IMP) and methylamine. Is required for the catabolism of cytosolic N6-mAMP, which is derived from the degradation of mRNA containing N6-methylated adenine (m6A). This is N6-Methyl-AMP deaminase-L (mapda.L) from Xenopus laevis (African clawed frog).